Consider the following 204-residue polypeptide: 3-isopropylmalate dehydratase small subunit (204 aa).

This sequence belongs to the LeuD family. LeuD type 1 subfamily. In terms of assembly, heterodimer of LeuC and LeuD.

It carries out the reaction (2R,3S)-3-isopropylmalate = (2S)-2-isopropylmalate. The protein operates within amino-acid biosynthesis; L-leucine biosynthesis; L-leucine from 3-methyl-2-oxobutanoate: step 2/4. Functionally, catalyzes the isomerization between 2-isopropylmalate and 3-isopropylmalate, via the formation of 2-isopropylmaleate. This chain is 3-isopropylmalate dehydratase small subunit, found in Clavibacter michiganensis subsp. michiganensis (strain NCPPB 382).